The primary structure comprises 95 residues: Large ribosomal subunit protein uL23 (95 aa).

It belongs to the universal ribosomal protein uL23 family. As to quaternary structure, part of the 50S ribosomal subunit. Contacts protein L29, and trigger factor when it is bound to the ribosome.

In terms of biological role, one of the early assembly proteins it binds 23S rRNA. One of the proteins that surrounds the polypeptide exit tunnel on the outside of the ribosome. Forms the main docking site for trigger factor binding to the ribosome. This is Large ribosomal subunit protein uL23 from Desulfitobacterium hafniense (strain DSM 10664 / DCB-2).